The following is a 389-amino-acid chain: Transcription factor TGAL10 (389 aa).

A disordered region spans residues 80–110 (DDQDNAAALQESPRHASDSFEQEASKPRDKI). Positions 91–110 (SPRHASDSFEQEASKPRDKI) are enriched in basic and acidic residues. The bZIP domain maps to 107-151 (RDKIQRRLAQNREAARKSRLRKKAYIQNLETSRMKLAHLEQEITR). The basic motif stretch occupies residues 109-129 (KIQRRLAQNREAARKSRLRKK). Positions 135–149 (LETSRMKLAHLEQEI) are leucine-zipper. The region spanning 176–389 (VVTFEVEYAQ…LHVRRRAELG (214 aa)) is the DOG1 domain. 2 disordered regions span residues 320–345 (TSCD…GDGG) and 370–389 (HRRS…AELG). A compositionally biased stretch (basic residues) spans 380-389 (LHVRRRAELG).

It belongs to the bZIP family.

The protein localises to the nucleus. In terms of biological role, transcriptional regulator involved in defense response. This Oryza sativa subsp. japonica (Rice) protein is Transcription factor TGAL10.